Consider the following 215-residue polypeptide: Protein-methionine-sulfoxide reductase heme-binding subunit MsrQ (215 aa).

The next 6 membrane-spanning stretches (helical) occupy residues 17 to 37 (AAIWSLYVIGLCPGLWYFYLA), 50 to 70 (FEHLLGIWALRFLCLGLLVTP), 85 to 105 (ALGLIAFYYVLAHFTVYLVLD), 121 to 141 (PYIMLGMAGLIILIPLALTSN), 152 to 172 (WNTLHKLVYLVLIVGVLHFVL), and 177 to 197 (ITLEPVFYISTMVVLLGYRLV).

This sequence belongs to the MsrQ family. In terms of assembly, heterodimer of a catalytic subunit (MsrP) and a heme-binding subunit (MsrQ). It depends on FMN as a cofactor. Heme b serves as cofactor.

Its subcellular location is the cell inner membrane. Its function is as follows. Part of the MsrPQ system that repairs oxidized periplasmic proteins containing methionine sulfoxide residues (Met-O), using respiratory chain electrons. Thus protects these proteins from oxidative-stress damage caused by reactive species of oxygen and chlorine generated by the host defense mechanisms. MsrPQ is essential for the maintenance of envelope integrity under bleach stress, rescuing a wide series of structurally unrelated periplasmic proteins from methionine oxidation. MsrQ provides electrons for reduction to the reductase catalytic subunit MsrP, using the quinone pool of the respiratory chain. The polypeptide is Protein-methionine-sulfoxide reductase heme-binding subunit MsrQ (Agrobacterium fabrum (strain C58 / ATCC 33970) (Agrobacterium tumefaciens (strain C58))).